A 769-amino-acid polypeptide reads, in one-letter code: Integrin beta-8 (769 aa).

The N-terminal stretch at 1–42 (MCGSALAFFTAAFVCLQNDRRGPASFLWAAWVFSLVLGLGQG) is a signal peptide. Topologically, residues 43-684 (EDNRCASSNA…ECFSSPSYLR (642 aa)) are extracellular. The PSI domain maps to 46 to 95 (RCASSNAASCARCLALGPECGWCVQEDFISGGSRSERCDIVSNLISKGCS). Disulfide bonds link C47-C65, C55-C469, C58-C83, C68-C94, C211-C218, C266-C307, C407-C419, C439-C467, C471-C491, C471-C494, C481-C494, C499-C528, C511-C526, C520-C531, C533-C546, C553-C567, C561-C572, C574-C583, C585-C609, C593-C607, C601-C612, C614-C624, C627-C630, C634-C661, and C640-C657. The region spanning 146–384 (PVDLYYLVDV…NLVVEAYQKL (239 aa)) is the VWFA domain. The Mg(2+) site is built by D154 and S156. D193 lines the Ca(2+) pocket. N233 is a glycosylation site (N-linked (GlcNAc...) asparagine). Residues N249, D251, P253, and E254 each contribute to the Ca(2+) site. E254 is a Mg(2+) binding site. N402 carries N-linked (GlcNAc...) asparagine glycosylation. N421, N431, N456, and N466 each carry an N-linked (GlcNAc...) asparagine glycan. I-EGF domains follow at residues 471 to 495 (CEDNRGPKGKCVDETFLDSKCFQCD), 499 to 547 (CHFD…KYCE), 548 to 584 (KDDFSCPYHHGNLCAGHGECEAGRCQCFSGWEGDRCQ), and 585 to 625 (CPSA…RFCE). Residue N648 is glycosylated (N-linked (GlcNAc...) asparagine). Residues 685–704 (IFFIIFIVTFLIGLLKVLII) form a helical membrane-spanning segment. The Cytoplasmic portion of the chain corresponds to 705 to 769 (RQVILQWNSN…NAHETFRCNF (65 aa)).

It belongs to the integrin beta chain family. Heterodimer of an alpha and a beta subunit. Beta-8 (ITGB8) associates with alpha-V (ITGAV) to form ITGAV:ITGB8. ITGAV:ITGB8 interacts with TGFB1. Placenta, kidney, brain, ovary, uterus and in several transformed cells. Transiently expressed in 293 human embryonic kidney cells.

It is found in the cell membrane. Integrin alpha-V:beta-8 (ITGAV:ITGB8) is a receptor for fibronectin. It recognizes the sequence R-G-D in its ligands. Integrin alpha-V:beta-6 (ITGAV:ITGB6) mediates R-G-D-dependent release of transforming growth factor beta-1 (TGF-beta-1) from regulatory Latency-associated peptide (LAP), thereby playing a key role in TGF-beta-1 activation on the surface of activated regulatory T-cells (Tregs). Required during vasculogenesis. This is Integrin beta-8 from Homo sapiens (Human).